The following is a 404-amino-acid chain: Arginine biosynthesis bifunctional protein ArgJ (404 aa).

Substrate-binding residues include Thr-156, Lys-182, Thr-193, Glu-277, Asn-399, and Ser-404. Catalysis depends on Thr-193, which acts as the Nucleophile.

Belongs to the ArgJ family. In terms of assembly, heterotetramer of two alpha and two beta chains.

The protein localises to the cytoplasm. It catalyses the reaction N(2)-acetyl-L-ornithine + L-glutamate = N-acetyl-L-glutamate + L-ornithine. The catalysed reaction is L-glutamate + acetyl-CoA = N-acetyl-L-glutamate + CoA + H(+). Its pathway is amino-acid biosynthesis; L-arginine biosynthesis; L-ornithine and N-acetyl-L-glutamate from L-glutamate and N(2)-acetyl-L-ornithine (cyclic): step 1/1. It participates in amino-acid biosynthesis; L-arginine biosynthesis; N(2)-acetyl-L-ornithine from L-glutamate: step 1/4. Catalyzes two activities which are involved in the cyclic version of arginine biosynthesis: the synthesis of N-acetylglutamate from glutamate and acetyl-CoA as the acetyl donor, and of ornithine by transacetylation between N(2)-acetylornithine and glutamate. This is Arginine biosynthesis bifunctional protein ArgJ from Chlorobaculum tepidum (strain ATCC 49652 / DSM 12025 / NBRC 103806 / TLS) (Chlorobium tepidum).